The following is a 232-amino-acid chain: Lipoprotein-releasing system ATP-binding protein LolD (232 aa).

The ABC transporter domain occupies 11-232; it reads IEVTDLQRAF…LHDGRLIEEY (222 aa). 47–54 contributes to the ATP binding site; sequence GPSGAGKS.

Belongs to the ABC transporter superfamily. Lipoprotein translocase (TC 3.A.1.125) family. In terms of assembly, the complex is composed of two ATP-binding proteins (LolD) and two transmembrane proteins (LolC and LolE).

Its subcellular location is the cell inner membrane. In terms of biological role, part of the ABC transporter complex LolCDE involved in the translocation of mature outer membrane-directed lipoproteins, from the inner membrane to the periplasmic chaperone, LolA. Responsible for the formation of the LolA-lipoprotein complex in an ATP-dependent manner. This is Lipoprotein-releasing system ATP-binding protein LolD from Zymomonas mobilis subsp. mobilis (strain ATCC 10988 / DSM 424 / LMG 404 / NCIMB 8938 / NRRL B-806 / ZM1).